The chain runs to 721 residues: Catalase-peroxidase 1 (721 aa).

Residues 98–226 constitute a cross-link (tryptophyl-tyrosyl-methioninium (Trp-Tyr) (with M-252)); the sequence is WHAAGTYRIA…LAAVMMGLIY (129 aa). Histidine 99 functions as the Proton acceptor in the catalytic mechanism. Residues 226–252 constitute a cross-link (tryptophyl-tyrosyl-methioninium (Tyr-Met) (with W-98)); that stretch reads YVNPEGVDGQPDPLKTAHDVRVTFARM. Histidine 267 is a heme b binding site.

Belongs to the peroxidase family. Peroxidase/catalase subfamily. Homodimer or homotetramer. Heme b is required as a cofactor. Post-translationally, formation of the three residue Trp-Tyr-Met cross-link is important for the catalase, but not the peroxidase activity of the enzyme.

It carries out the reaction H2O2 + AH2 = A + 2 H2O. The enzyme catalyses 2 H2O2 = O2 + 2 H2O. Functionally, bifunctional enzyme with both catalase and broad-spectrum peroxidase activity. The protein is Catalase-peroxidase 1 of Vibrio parahaemolyticus serotype O3:K6 (strain RIMD 2210633).